Here is a 144-residue protein sequence, read N- to C-terminus: Large ribosomal subunit protein uL15 (144 aa).

Residues 1 to 57 are disordered; it reads MKLNDLSPAPGSRREKHRPGRGIGSGLGKTGGRGHKGQTSRSGGSIAPGFEGGQQPL. Residues 21 to 31 are compositionally biased toward gly residues; it reads RGIGSGLGKTG.

Belongs to the universal ribosomal protein uL15 family. Part of the 50S ribosomal subunit.

Binds to the 23S rRNA. This chain is Large ribosomal subunit protein uL15, found in Pseudomonas entomophila (strain L48).